Consider the following 209-residue polypeptide: Large ribosomal subunit protein uL4 (209 aa).

The segment at arginine 46 to glycine 76 is disordered. Over residues lysine 63–glycine 76 the composition is skewed to basic residues.

This sequence belongs to the universal ribosomal protein uL4 family. In terms of assembly, part of the 50S ribosomal subunit.

In terms of biological role, one of the primary rRNA binding proteins, this protein initially binds near the 5'-end of the 23S rRNA. It is important during the early stages of 50S assembly. It makes multiple contacts with different domains of the 23S rRNA in the assembled 50S subunit and ribosome. Forms part of the polypeptide exit tunnel. The protein is Large ribosomal subunit protein uL4 of Halothermothrix orenii (strain H 168 / OCM 544 / DSM 9562).